A 508-amino-acid polypeptide reads, in one-letter code: Cyclin-A1-1 (508 aa).

Low complexity predominate over residues Met1–Val28. 2 disordered regions span residues Met1 to Ala40 and Val82 to Leu125. Gly residues predominate over residues Gly29 to Ala39. Residues Ala98–Ala111 show a composition bias toward low complexity.

It belongs to the cyclin family. Cyclin AB subfamily. As to expression, expressed in the dividing region of the root cap and root apex. Expressed in the intercalary meristem of internodes and in adventitious roots under submergence conditions.

Functionally, involved in the control of the cell cycle at the G2/M (mitosis) transition. This chain is Cyclin-A1-1 (CYCA1-1), found in Oryza sativa subsp. japonica (Rice).